We begin with the raw amino-acid sequence, 339 residues long: NADH-quinone oxidoreductase subunit H (339 aa).

The next 9 membrane-spanning stretches (helical) occupy residues 9-29 (IFPL…LILC), 50-70 (PNVV…KLLF), 82-102 (ILFI…WAVI), 115-135 (VGVL…IIAG), 161-181 (MGLV…SEII), 187-207 (MPWW…ISVL), 235-255 (MGFA…SAMT), 275-295 (IPGF…FLWI), and 311-331 (GWKV…SVLV).

The protein belongs to the complex I subunit 1 family. In terms of assembly, NDH-1 is composed of 14 different subunits. Subunits NuoA, H, J, K, L, M, N constitute the membrane sector of the complex.

The protein resides in the cell inner membrane. It carries out the reaction a quinone + NADH + 5 H(+)(in) = a quinol + NAD(+) + 4 H(+)(out). NDH-1 shuttles electrons from NADH, via FMN and iron-sulfur (Fe-S) centers, to quinones in the respiratory chain. The immediate electron acceptor for the enzyme in this species is believed to be ubiquinone. Couples the redox reaction to proton translocation (for every two electrons transferred, four hydrogen ions are translocated across the cytoplasmic membrane), and thus conserves the redox energy in a proton gradient. This subunit may bind ubiquinone. The sequence is that of NADH-quinone oxidoreductase subunit H from Rickettsia peacockii (strain Rustic).